Here is a 51-residue protein sequence, read N- to C-terminus: Large ribosomal subunit protein eL39 (51 aa).

The protein belongs to the eukaryotic ribosomal protein eL39 family.

In Thermoplasma acidophilum (strain ATCC 25905 / DSM 1728 / JCM 9062 / NBRC 15155 / AMRC-C165), this protein is Large ribosomal subunit protein eL39 (rpl39e).